The primary structure comprises 164 residues: Methanogen homoaconitase small subunit 2 (164 aa).

The YLRT signature appears at 26–29 (YLRT).

The protein belongs to the LeuD family. LeuD type 2 subfamily. As to quaternary structure, heterotetramer of 2 HacA and 2 HacB proteins. Cannot form a complex with LeuC.

It catalyses the reaction (2R)-homocitrate = (2R,3S)-homoisocitrate. The enzyme catalyses (2R)-homocitrate = cis-homoaconitate + H2O. The catalysed reaction is (2R,3S)-homoisocitrate = cis-homoaconitate + H2O. It carries out the reaction cis-(homo)2aconitate + H2O = (2R,3S)-iso(homo)2citrate. It catalyses the reaction cis-(homo)3aconitate + H2O = (2R,3S)-iso(homo)3citrate. It participates in organic acid metabolism; 2-oxosuberate biosynthesis. Component of a hydro-lyase with broad substrate specificity for cis-unsaturated tricarboxylic acids. Catalyzes both the reversible dehydration of (R)-homocitrate ((R)-2-hydroxybutane-1,2,4-tricarboxylate) to produce cis-homoaconitate ((Z)-but-1-ene-1,2,4-tricarboxylate), and its hydration to homoisocitrate ((1R,2S)-1-hydroxybutane-1,2,4-tricarboxylate). Is also able to hydrate the analogous longer chain substrates cis-homo(2)-aconitate, cis-homo(3)-aconitate. These reactions are part of the biosynthesis pathway of coenzyme B. The polypeptide is Methanogen homoaconitase small subunit 2 (hacB2) (Methanosarcina acetivorans (strain ATCC 35395 / DSM 2834 / JCM 12185 / C2A)).